We begin with the raw amino-acid sequence, 129 residues long: RxLR effector protein SFI6 (129 aa).

Positions 1 to 16 (MTLVVLATGLLASGTA) are cleaved as a signal peptide. Residues 42 to 64 (RFLRSHQITDDKVEINEHGEEER) carry the RxLR-dEER motif.

The protein belongs to the RxLR effector family.

It is found in the secreted. Its subcellular location is the host cytoplasm. It localises to the host cell membrane. In terms of biological role, effector that suppresses flg22-induced post-translational MAP kinase activation in tomato but not in Arabidopsis. The perception of highly conserved pathogen- or microbe-associated molecular patterns (PAMPs/MAMPs), such as flg22, triggers converging signaling pathways recruiting MAP kinase cascades and inducing transcriptional re-programming, yielding a generic antimicrobial response. In Phytophthora infestans (strain T30-4) (Potato late blight agent), this protein is RxLR effector protein SFI6.